The primary structure comprises 396 residues: Putative F-box/kelch-repeat protein At3g17540 (396 aa).

One can recognise an F-box domain in the interval 4–50 (TMVISDLPHEIESEILSRVPTKSLAKLHTTCKRWYALFRDPRFVKKN). Kelch repeat units follow at residues 163-209 (LRYC…GMSL), 253-299 (VLSI…FLAV), and 338-386 (RIYI…KRKG).

This is Putative F-box/kelch-repeat protein At3g17540 from Arabidopsis thaliana (Mouse-ear cress).